The chain runs to 1238 residues: DNA-directed RNA polymerase subunit beta (1238 aa).

The segment at 1187 to 1238 is disordered; that stretch reads EGREDTPPEEVYEESYEEGFEEEIEELPEDIDFEPDSFDIENDDLDLEDFDI. Acidic residues predominate over residues 1193–1238; that stretch reads PPEEVYEESYEEGFEEEIEELPEDIDFEPDSFDIENDDLDLEDFDI.

It belongs to the RNA polymerase beta chain family. In terms of assembly, the RNAP catalytic core consists of 2 alpha, 1 beta, 1 beta' and 1 omega subunit. When a sigma factor is associated with the core the holoenzyme is formed, which can initiate transcription.

The catalysed reaction is RNA(n) + a ribonucleoside 5'-triphosphate = RNA(n+1) + diphosphate. Functionally, DNA-dependent RNA polymerase catalyzes the transcription of DNA into RNA using the four ribonucleoside triphosphates as substrates. This Thermoanaerobacter pseudethanolicus (strain ATCC 33223 / 39E) (Clostridium thermohydrosulfuricum) protein is DNA-directed RNA polymerase subunit beta.